The chain runs to 239 residues: tRNA (guanine-N(1)-)-methyltransferase (239 aa).

Residues G108 and 127–132 (LGDYVL) each bind S-adenosyl-L-methionine.

It belongs to the RNA methyltransferase TrmD family. In terms of assembly, homodimer.

It is found in the cytoplasm. The enzyme catalyses guanosine(37) in tRNA + S-adenosyl-L-methionine = N(1)-methylguanosine(37) in tRNA + S-adenosyl-L-homocysteine + H(+). In terms of biological role, specifically methylates guanosine-37 in various tRNAs. The chain is tRNA (guanine-N(1)-)-methyltransferase from Streptococcus pneumoniae serotype 2 (strain D39 / NCTC 7466).